A 406-amino-acid chain; its full sequence is Acetylornithine aminotransferase (406 aa).

Pyridoxal 5'-phosphate-binding positions include 108–109 (GA) and F141. R144 contacts N(2)-acetyl-L-ornithine. 226-229 (DEVQ) is a binding site for pyridoxal 5'-phosphate. K255 carries the N6-(pyridoxal phosphate)lysine modification. T283 lines the N(2)-acetyl-L-ornithine pocket. Pyridoxal 5'-phosphate is bound at residue T284.

The protein belongs to the class-III pyridoxal-phosphate-dependent aminotransferase family. ArgD subfamily. As to quaternary structure, homodimer. Requires pyridoxal 5'-phosphate as cofactor.

It localises to the cytoplasm. The catalysed reaction is N(2)-acetyl-L-ornithine + 2-oxoglutarate = N-acetyl-L-glutamate 5-semialdehyde + L-glutamate. It participates in amino-acid biosynthesis; L-arginine biosynthesis; N(2)-acetyl-L-ornithine from L-glutamate: step 4/4. The protein is Acetylornithine aminotransferase of Pseudomonas putida (strain ATCC 47054 / DSM 6125 / CFBP 8728 / NCIMB 11950 / KT2440).